Here is a 3164-residue protein sequence, read N- to C-terminus: Protein eyes shut homolog (3164 aa).

Residues 1-21 form the signal peptide; the sequence is MTDKSIIILSLMVFHSSFING. 4 N-linked (GlcNAc...) asparagine glycosylation sites follow: Asn42, Asn105, Asn117, and Asn166. EGF-like domains are found at residues 170 to 212, 213 to 254, and 256 to 292; these read KQQF…KYCQ, ELDA…KNCS, and IIGQ…PFCE. Cystine bridges form between Cys174–Cys189, Cys183–Cys200, Cys202–Cys211, Cys217–Cys228, Cys222–Cys242, Cys244–Cys253, Cys260–Cys270, Cys265–Cys280, and Cys282–Cys291. 4 N-linked (GlcNAc...) asparagine glycosylation sites follow: Asn225, Asn252, Asn269, and Asn272. N-linked (GlcNAc...) asparagine glycosylation is found at Asn311 and Asn343. EGF-like domains follow at residues 332–368 and 370–406; these read DVSE…LLCK and IQTS…KNCE. 5 disulfides stabilise this stretch: Cys336-Cys347, Cys341-Cys356, Cys358-Cys367, Cys374-Cys385, and Cys396-Cys405. The N-linked (GlcNAc...) asparagine glycan is linked to Asn382. Asn506, Asn521, and Asn566 each carry an N-linked (GlcNAc...) asparagine glycan. One can recognise an EGF-like 6 domain in the interval 567-602; sequence TTDDQENECQHEAICKDEINRPRCSCSLSYIGRLCV. Disulfide bonds link Cys575–Cys590 and Cys592–Cys601. N-linked (GlcNAc...) asparagine glycosylation is found at Asn611 and Asn654. In terms of domain architecture, EGF-like 7 spans 643–679; sequence DTEDCKSVSCKNGTTSIHLRGYFFCKCVPGFKGTQRE. 6 cysteine pairs are disulfide-bonded: Cys652/Cys667, Cys685/Cys696, Cys690/Cys705, Cys707/Cys719, Cys737/Cys748, and Cys742/Cys757. Residues 681-720 form the EGF-like 8; calcium-binding domain; that stretch reads DIDECASHPCKNGATCIDQPGNYFCQCVPPFKVVDGFSCL. The 37-residue stretch at 733–769 folds into the EGF-like 9; calcium-binding domain; sequence DIDDCILNACEHNSTCKDLHLSYQCVCLSGWEGNFSE. N-linked (GlcNAc...) asparagine glycans are attached at residues Asn745, Asn766, Asn782, Asn783, and Asn805. The EGF-like 10; calcium-binding domain occupies 771-807; it reads ESNECKMNPCKNNSTCIDLYKSYRCECTSGWTGQNCS. 33 disulfide bridges follow: Cys775–Cys786, Cys780–Cys795, Cys797–Cys806, Cys813–Cys824, Cys818–Cys835, Cys837–Cys846, Cys853–Cys866, Cys860–Cys876, Cys878–Cys887, Cys894–Cys905, Cys899–Cys914, Cys916–Cys925, Cys932–Cys943, Cys937–Cys952, Cys954–Cys963, Cys970–Cys981, Cys975–Cys990, Cys992–Cys1001, Cys1008–Cys1019, Cys1013–Cys1028, Cys1030–Cys1039, Cys1046–Cys1056, Cys1051–Cys1065, Cys1067–Cys1076, Cys1083–Cys1094, Cys1088–Cys1103, Cys1105–Cys1114, Cys1121–Cys1137, Cys1131–Cys1147, Cys1149–Cys1158, Cys1165–Cys1176, Cys1170–Cys1185, and Cys1187–Cys1196. 3 EGF-like domains span residues 809–847, 849–888, and 890–926; these read EINE…RFCH, RYNP…KNCE, and DVKE…SLCE. N-linked (GlcNAc...) asparagine glycosylation is found at Asn862 and Asn863. An EGF-like 14; calcium-binding domain is found at 928 to 964; the sequence is EINECSSEPCKNNGTCVDLTNRFFCNCEPGYHGPFCE. An N-linked (GlcNAc...) asparagine glycan is attached at Asn940. The 37-residue stretch at 966–1002 folds into the EGF-like 15 domain; sequence DVNKCKISPCLDEENCVYRTDGYNCLCAPGYTGINCE. The 37-residue stretch at 1004 to 1040 folds into the EGF-like 16; calcium-binding domain; the sequence is NLDECLSEPCLHDGVCIDGINHYTCDCKSGFFGTHCE. 3 EGF-like domains span residues 1042 to 1077, 1079 to 1115, and 1117 to 1159; these read NAND…TQCK, KIND…AYCE, and SIDN…QFCE. Residues 1161 to 1197 enclose the EGF-like 20; calcium-binding domain; the sequence is NINECSSSPCLHGADCEDHINGYVCKCQPGWSGHHCE. 6 N-linked (GlcNAc...) asparagine glycosylation sites follow: Asn1509, Asn1522, Asn1906, Asn1941, Asn1960, and Asn2033. Residues 1883–2063 form the Laminin G-like 1 domain; the sequence is FSCVRYYGDS…AVKNYHINNC (181 aa). 4 cysteine pairs are disulfide-bonded: Cys2037/Cys2063, Cys2103/Cys2114, Cys2108/Cys2128, and Cys2130/Cys2139. The 42-residue stretch at 2099 to 2140 folds into the EGF-like 21 domain; that stretch reads APSVCQQDVCHNGGTCHPIFLSRGIVSFQCDCPLHFTGRFCE. Residues 2145-2339 form the Laminin G-like 2 domain; sequence LFFPSFNGNS…NIENCHVPWC (195 aa). N-linked (GlcNAc...) asparagine glycosylation is found at Asn2170, Asn2185, and Asn2228. 6 disulfide bridges follow: Cys2308–Cys2339, Cys2339–Cys2350, Cys2344–Cys2359, Cys2375–Cys2386, Cys2380–Cys2396, and Cys2398–Cys2407. 2 EGF-like domains span residues 2335–2368 and 2371–2408; these read HVPW…YSGK and QFAS…PLCT. Asn2347 carries N-linked (GlcNAc...) asparagine glycosylation. Asn2412, Asn2453, Asn2484, Asn2506, and Asn2532 each carry an N-linked (GlcNAc...) asparagine glycan. Positions 2419 to 2609 constitute a Laminin G-like 3 domain; that stretch reads SGTDAFGYTS…PNAGRSVGQC (191 aa). Cystine bridges form between Cys2576–Cys2609, Cys2614–Cys2625, and Cys2619–Cys2634. EGF-like domains follow at residues 2610–2646 and 2648–2689; these read HASP…AFCT and TVST…IYCE. Asn2635 is a glycosylation site (N-linked (GlcNAc...) asparagine). 4 disulfides stabilise this stretch: Cys2636–Cys2645, Cys2652–Cys2668, Cys2662–Cys2677, and Cys2679–Cys2688. The region spanning 2717–2895 is the Laminin G-like 4 domain; sequence DPSFRSNELS…AKGGSNVGDC (179 aa). N-linked (GlcNAc...) asparagine glycosylation is found at Asn2775, Asn2800, and Asn2824. Cystine bridges form between Cys2868–Cys2895, Cys2900–Cys2911, Cys2905–Cys2920, and Cys2922–Cys2931. 2 EGF-like domains span residues 2896–2932 and 2933–2970; these read DGTA…NTCN and QSVY…RYCE. A glycan (N-linked (GlcNAc...) asparagine) is linked at Asn2914. A glycan (N-linked (GlcNAc...) asparagine) is linked at Asn2932. Intrachain disulfides connect Cys2937/Cys2948, Cys2942/Cys2958, and Cys2960/Cys2969. Asn2951 is a glycosylation site (N-linked (GlcNAc...) asparagine). N-linked (GlcNAc...) asparagine glycosylation is found at Asn2971, Asn3006, Asn3036, Asn3057, Asn3073, and Asn3082. Positions 2975–3164 constitute a Laminin G-like 5 domain; the sequence is FSTAKFMGNS…YDGDEQNEVT (190 aa).

The protein belongs to the EYS family.

Its subcellular location is the cell projection. The protein resides in the cilium. It is found in the photoreceptor outer segment. The protein localises to the cytoplasm. It localises to the cytoskeleton. Its subcellular location is the cilium axoneme. The protein resides in the microtubule organizing center. It is found in the centrosome. The protein localises to the secreted. It localises to the extracellular space. Its subcellular location is the extracellular matrix. The protein resides in the interphotoreceptor matrix. In terms of biological role, required to maintain the integrity of photoreceptor cells. Specifically required for normal morphology of the photoreceptor ciliary pocket, and might thus facilitate protein trafficking between the photoreceptor inner and outer segments via the transition zone. In Pongo abelii (Sumatran orangutan), this protein is Protein eyes shut homolog (EYS).